The chain runs to 344 residues: Flavonoid 7-O-methyltransferase 1B (344 aa).

D211 lines the S-adenosyl-L-methionine pocket. H249 serves as the catalytic Proton acceptor.

This sequence belongs to the class I-like SAM-binding methyltransferase superfamily. Cation-independent O-methyltransferase family. Homodimer.

The catalysed reaction is scutellarein + S-adenosyl-L-methionine = scutellarein 7-methyl ether + S-adenosyl-L-homocysteine. The enzyme catalyses 4',7,8-trihydroxyflavone + S-adenosyl-L-methionine = 4',8-dihydroxy-7-methoxyflavone + S-adenosyl-L-homocysteine. It catalyses the reaction isorhamnetin + S-adenosyl-L-methionine = rhamnacene + S-adenosyl-L-homocysteine + H(+). It carries out the reaction kaempferol + S-adenosyl-L-methionine = kaempferol 7-methyl ether + S-adenosyl-L-homocysteine + H(+). The catalysed reaction is (2S)-naringenin + S-adenosyl-L-methionine = (2S)-sakuranetin + S-adenosyl-L-homocysteine + H(+). The enzyme catalyses quercetin + S-adenosyl-L-methionine = rhamnetin + S-adenosyl-L-homocysteine + H(+). It catalyses the reaction apigenin + S-adenosyl-L-methionine = genkwanin + S-adenosyl-L-homocysteine + H(+). It carries out the reaction luteolin + S-adenosyl-L-methionine = luteolin 7-methyl ether + S-adenosyl-L-homocysteine + H(+). The protein operates within flavonoid metabolism. Functionally, flavonoid 7-O-methyltransferase involved in the biosynthesis of polymethoxylated flavonoids natural products such as pebrellin, aroma compounds which contribute to the flavor of peppermint, and exhibit pharmacological activities such as anti-allergic, anti-oxidant, antibacterial, anti-proliferative, and anti-inflammatory effects. Catalyzes S-adenosylmethionine-dependent regioselective 7-O-methylation of flavonoids; active on various hydroxylated flavonoid substrates, including luteolin (LUT), quercetin, kaempferol, isorhamnetin, apigenin (API), scutellarein (6-hydroxy-apigenin, 6-OH-API, SCU), 7,8,4'-trihydroxy-flavone and naringenin (NAR), and, with a lower efficiency, 7,8,3',4'-tetrahydroxy-flavone, taxifolin and hesperetin. The protein is Flavonoid 7-O-methyltransferase 1B of Mentha piperita (Peppermint).